The primary structure comprises 457 residues: Keratin, type II cytoskeletal 7 (457 aa).

Ser-2 carries the post-translational modification N-acetylserine. Phosphoserine is present on Ser-2. Residues 2 to 84 (SIHFSSRSTA…DPTIQQVRQE (83 aa)) are head. Ser-7 is a glycosylation site (O-linked (GlcNAc) serine). The residue at position 15 (Arg-15) is a Dimethylated arginine; alternate. Arg-15 is subject to Omega-N-methylarginine; alternate. Phosphoserine is present on residues Ser-47 and Ser-65. A coil 1A region spans residues 84–120 (EEREQIKTLNNKFASFIDKVRFLEQQNKMLETKWALL). The region spanning 85–397 (EREQIKTLNN…KLLEGEESRL (313 aa)) is the IF rod domain. Position 91 is a phosphothreonine (Thr-91). The segment at 121–138 (QEQKSAKSSQLPRIFEAQ) is linker 1. Lys-124 participates in a covalent cross-link: Glycyl lysine isopeptide (Lys-Gly) (interchain with G-Cter in SUMO2). A coil 1B region spans residues 139–230 (IAGLRQQLET…TLHETELAEL (92 aa)). Residue Lys-173 is modified to N6-acetyllysine. Ser-211, Ser-246, and Ser-248 each carry phosphoserine. Residues 231–254 (QSQISDTSVVLSMDNSRSLDLDGI) are linker 12. The tract at residues 255 to 393 (IADVKAQYEE…ATYRKLLEGE (139 aa)) is coil 2. Glycyl lysine isopeptide (Lys-Gly) (interchain with G-Cter in SUMO2) cross-links involve residues Lys-259 and Lys-280. The residue at position 283 (Thr-283) is a Phosphothreonine. Residues Lys-290 and Lys-325 each participate in a glycyl lysine isopeptide (Lys-Gly) (interchain with G-Cter in SUMO2) cross-link. Residues 394 to 457 (ESRLSGDGMG…TSTTRRGTHN (64 aa)) form a tail region.

Belongs to the intermediate filament family. Heterotetramer of two type I and two type II keratins. Interacts with eukaryotic translation initiator factor 3 (eIF3) subunit EIF3S10. Interacts with GPER1. Arg-15 is dimethylated, probably to asymmetric dimethylarginine. In terms of tissue distribution, expressed in most simple epithelia tested including liver, lactating mammary gland, lung, kidney, stomach, duodenum, colon, oviduct, uterus, pancreas, epididymis, prostate, preputial gland and mesothelium, and in most stratified epithelia tested including dorsal skin, paw/toe, tail, tongue, cervix, forestomach, and bladder. Also expressed in Henle layer of the inner root sheath of whisker follicle.

Its function is as follows. Blocks interferon-dependent interphase and stimulates DNA synthesis in cells. This chain is Keratin, type II cytoskeletal 7, found in Mus musculus (Mouse).